The primary structure comprises 711 residues: Ribosomal RNA large subunit methyltransferase K/L (711 aa).

The THUMP domain occupies 42 to 153; the sequence is DAQRAVLWSR…KGRATISVDL (112 aa).

It belongs to the methyltransferase superfamily. RlmKL family.

The protein resides in the cytoplasm. It carries out the reaction guanosine(2445) in 23S rRNA + S-adenosyl-L-methionine = N(2)-methylguanosine(2445) in 23S rRNA + S-adenosyl-L-homocysteine + H(+). It catalyses the reaction guanosine(2069) in 23S rRNA + S-adenosyl-L-methionine = N(2)-methylguanosine(2069) in 23S rRNA + S-adenosyl-L-homocysteine + H(+). Functionally, specifically methylates the guanine in position 2445 (m2G2445) and the guanine in position 2069 (m7G2069) of 23S rRNA. In Xanthomonas oryzae pv. oryzae (strain MAFF 311018), this protein is Ribosomal RNA large subunit methyltransferase K/L.